We begin with the raw amino-acid sequence, 264 residues long: Thymidylate synthase (264 aa).

Arg-21 contributes to the dUMP binding site. His-51 provides a ligand contact to (6R)-5,10-methylene-5,6,7,8-tetrahydrofolate. Residue 126–127 (RR) coordinates dUMP. Cys-146 serves as the catalytic Nucleophile. Residues 166-169 (RSCD), Asn-177, and 207-209 (HLY) each bind dUMP. Asp-169 serves as a coordination point for (6R)-5,10-methylene-5,6,7,8-tetrahydrofolate. Ala-263 lines the (6R)-5,10-methylene-5,6,7,8-tetrahydrofolate pocket.

This sequence belongs to the thymidylate synthase family. Bacterial-type ThyA subfamily. In terms of assembly, homodimer.

The protein resides in the cytoplasm. It carries out the reaction dUMP + (6R)-5,10-methylene-5,6,7,8-tetrahydrofolate = 7,8-dihydrofolate + dTMP. The protein operates within pyrimidine metabolism; dTTP biosynthesis. Catalyzes the reductive methylation of 2'-deoxyuridine-5'-monophosphate (dUMP) to 2'-deoxythymidine-5'-monophosphate (dTMP) while utilizing 5,10-methylenetetrahydrofolate (mTHF) as the methyl donor and reductant in the reaction, yielding dihydrofolate (DHF) as a by-product. This enzymatic reaction provides an intracellular de novo source of dTMP, an essential precursor for DNA biosynthesis. This is Thymidylate synthase from Aeromonas salmonicida (strain A449).